We begin with the raw amino-acid sequence, 893 residues long: Ubiquitin-like protease 2 (893 aa).

The segment at 538 to 800 (PVVLLVKDIK…YNLILQQADK (263 aa)) is protease. Active-site residues include histidine 644, aspartate 678, and cysteine 743.

This sequence belongs to the peptidase C48 family.

The protein localises to the nucleus. It localises to the cytoplasm. The protein resides in the cytosol. Functionally, protease that catalyzes two essential functions in the smo-1 pathway: processing of full-length smo-1 to their mature forms and deconjugation of smo-1 from targeted proteins. May deconjugate smo-1 from the cadherin protein hmr-1 and plays a role in its recruitment to and the maintenance of adherens junctions. Required for epidermal morphogenesis during embryonic development. The polypeptide is Ubiquitin-like protease 2 (Caenorhabditis elegans).